Here is a 259-residue protein sequence, read N- to C-terminus: Pyridoxine 5'-phosphate synthase (259 aa).

Asparagine 6 contributes to the 3-amino-2-oxopropyl phosphate binding site. 8–9 (DH) serves as a coordination point for 1-deoxy-D-xylulose 5-phosphate. Arginine 17 lines the 3-amino-2-oxopropyl phosphate pocket. Histidine 42 functions as the Proton acceptor in the catalytic mechanism. The 1-deoxy-D-xylulose 5-phosphate site is built by arginine 44 and histidine 49. Glutamate 69 acts as the Proton acceptor in catalysis. Position 99 (threonine 99) interacts with 1-deoxy-D-xylulose 5-phosphate. Histidine 212 serves as the catalytic Proton donor. Residues glycine 213 and 234–235 (GH) each bind 3-amino-2-oxopropyl phosphate.

This sequence belongs to the PNP synthase family. In terms of assembly, homooctamer; tetramer of dimers.

It is found in the cytoplasm. The catalysed reaction is 3-amino-2-oxopropyl phosphate + 1-deoxy-D-xylulose 5-phosphate = pyridoxine 5'-phosphate + phosphate + 2 H2O + H(+). It participates in cofactor biosynthesis; pyridoxine 5'-phosphate biosynthesis; pyridoxine 5'-phosphate from D-erythrose 4-phosphate: step 5/5. Functionally, catalyzes the complicated ring closure reaction between the two acyclic compounds 1-deoxy-D-xylulose-5-phosphate (DXP) and 3-amino-2-oxopropyl phosphate (1-amino-acetone-3-phosphate or AAP) to form pyridoxine 5'-phosphate (PNP) and inorganic phosphate. This is Pyridoxine 5'-phosphate synthase from Nautilia profundicola (strain ATCC BAA-1463 / DSM 18972 / AmH).